The sequence spans 239 residues: tRNA1(Val) (adenine(37)-N6)-methyltransferase (239 aa).

Belongs to the methyltransferase superfamily. tRNA (adenine-N(6)-)-methyltransferase family.

It is found in the cytoplasm. It carries out the reaction adenosine(37) in tRNA1(Val) + S-adenosyl-L-methionine = N(6)-methyladenosine(37) in tRNA1(Val) + S-adenosyl-L-homocysteine + H(+). Specifically methylates the adenine in position 37 of tRNA(1)(Val) (anticodon cmo5UAC). This is tRNA1(Val) (adenine(37)-N6)-methyltransferase from Vibrio vulnificus (strain YJ016).